Here is a 95-residue protein sequence, read N- to C-terminus: Integration host factor subunit beta (95 aa).

The protein belongs to the bacterial histone-like protein family. In terms of assembly, heterodimer of an alpha and a beta chain.

Its function is as follows. This protein is one of the two subunits of integration host factor, a specific DNA-binding protein that functions in genetic recombination as well as in transcriptional and translational control. The protein is Integration host factor subunit beta of Shewanella putrefaciens (strain CN-32 / ATCC BAA-453).